Here is a 307-residue protein sequence, read N- to C-terminus: Ribonuclease Z (307 aa).

The Zn(2+) site is built by H63, H65, D67, H68, H143, D213, and H271. D67 (proton acceptor) is an active-site residue.

The protein belongs to the RNase Z family. As to quaternary structure, homodimer. Zn(2+) is required as a cofactor.

The enzyme catalyses Endonucleolytic cleavage of RNA, removing extra 3' nucleotides from tRNA precursor, generating 3' termini of tRNAs. A 3'-hydroxy group is left at the tRNA terminus and a 5'-phosphoryl group is left at the trailer molecule.. Zinc phosphodiesterase, which displays some tRNA 3'-processing endonuclease activity. Probably involved in tRNA maturation, by removing a 3'-trailer from precursor tRNA. This Lactococcus lactis subsp. cremoris (strain MG1363) protein is Ribonuclease Z.